The primary structure comprises 466 residues: Uronate isomerase (466 aa).

It belongs to the metallo-dependent hydrolases superfamily. Uronate isomerase family.

The catalysed reaction is D-glucuronate = D-fructuronate. It catalyses the reaction aldehydo-D-galacturonate = keto-D-tagaturonate. It participates in carbohydrate metabolism; pentose and glucuronate interconversion. The sequence is that of Uronate isomerase from Clostridium perfringens (strain 13 / Type A).